Consider the following 267-residue polypeptide: Cell division protein FtsQ (267 aa).

Over 1–32 the chain is Cytoplasmic; sequence MRQKTISNKNKQTKNTNNISLRRKLGLMYKKA. Residues 33 to 53 form a helical membrane-spanning segment; sequence ILVLKIVLMIFVCLFVFTKYF. At 54 to 267 the chain is on the periplasmic side; it reads TSIKTYLITN…DRNKYYIQKY (214 aa). Residues 73–141 enclose the POTRA domain; it reads FRLENVIIEG…NTVYIKLFER (69 aa).

This sequence belongs to the FtsQ/DivIB family. FtsQ subfamily.

The protein resides in the cell inner membrane. In terms of biological role, essential cell division protein. This chain is Cell division protein FtsQ, found in Rickettsia prowazekii (strain Madrid E).